The chain runs to 341 residues: tRNA N6-adenosine threonylcarbamoyltransferase (341 aa).

Residues H112 and H116 each coordinate Fe cation. Substrate contacts are provided by residues 134–138 (LASGG), D167, G180, and N279. D307 lines the Fe cation pocket.

This sequence belongs to the KAE1 / TsaD family. Requires Fe(2+) as cofactor.

The protein localises to the cytoplasm. It carries out the reaction L-threonylcarbamoyladenylate + adenosine(37) in tRNA = N(6)-L-threonylcarbamoyladenosine(37) in tRNA + AMP + H(+). Required for the formation of a threonylcarbamoyl group on adenosine at position 37 (t(6)A37) in tRNAs that read codons beginning with adenine. Is involved in the transfer of the threonylcarbamoyl moiety of threonylcarbamoyl-AMP (TC-AMP) to the N6 group of A37, together with TsaE and TsaB. TsaD likely plays a direct catalytic role in this reaction. The polypeptide is tRNA N6-adenosine threonylcarbamoyltransferase (Rickettsia bellii (strain OSU 85-389)).